An 887-amino-acid polypeptide reads, in one-letter code: Amyloid-beta-like protein (887 aa).

The signal sequence occupies residues 1–27 (MCAALRRNLLLRSLWVVLAIGTAQVQA). Over 28–813 (ASPRWEPQIA…HAAKEGRNVY (786 aa)) the chain is Extracellular. Positions 30-133 (PRWEPQIAVL…KPFRCLGPFQ (104 aa)) are GFLD subdomain. The E1 domain occupies 30–199 (PRWEPQIAVL…SGVEFVCCPK (170 aa)). Intrachain disulfides connect Cys-40–Cys-70, Cys-81–Cys-128, Cys-106–Cys-116, Cys-143–Cys-197, Cys-154–Cys-184, and Cys-168–Cys-196. The segment at 141–199 (EGCLFDHIHNASRCWPFVRWNQTGAAACQERGMQMRSFAMLLPCGISVFSGVEFVCCPK) is cuBD subdomain. N-linked (GlcNAc...) asparagine glycosylation is found at Asn-150 and Asn-161. Disordered stretches follow at residues 225 to 365 (NDEL…STPQ) and 377 to 396 (NSGNSGTGAGAPPSTAQPTS). 2 N-linked (GlcNAc...) asparagine glycosylation sites follow: Asn-237 and Asn-240. The span at 246-267 (NEDDLDDEDDLMGDDEEDDMVA) shows a compositional bias: acidic residues. Low complexity predominate over residues 268 to 292 (DEAATAGGSPNTGSSGDSNSGSLDD). The span at 293–321 (INAEYDSGEEGDNYEEDGAGSESEAEVEA) shows a compositional bias: acidic residues. The span at 329 to 352 (AKVVSLKSDSSSPSSAPVAPAPEK) shows a compositional bias: low complexity. The 203-residue stretch at 395–597 (TSDPYFTHFD…AKIAQLMNDY (203 aa)) folds into the E2 domain. Asn-574 carries an N-linked (GlcNAc...) asparagine glycan. The disordered stretch occupies residues 675 to 743 (KSQVAEQQSQ…TEYGEATVSS (69 aa)). The span at 681–699 (QQSQPTQSSTQSQAQQQQQ) shows a compositional bias: low complexity. A helical transmembrane segment spans residues 814 to 834 (FTLSFAGIALMAAVFVGVAVA). The Cytoplasmic portion of the chain corresponds to 835–887 (KWRTSRSPHAQGFIEVDQNVTTHHPIVREEKIVPNMQINGYENPTYKYFEVKE). The YENPXY motif signature appears at 875 to 880 (YENPTY).

This sequence belongs to the APP family. As to quaternary structure, interacts (via the intracellular domain, ICD) with APP-BP1. In terms of tissue distribution, expressed in postmitotic neurons in the central and peripheral nervous systems. Within the nervous system, transcripts are not observed in neuroblasts, newly generated neurons and at least one class of presumed glial cells.

It is found in the membrane. During development, plays a role in the regulation of the neddylation pathway. Appl and APP-BP1 interact antagonistically during development. The protein is Amyloid-beta-like protein (Appl) of Drosophila melanogaster (Fruit fly).